A 313-amino-acid polypeptide reads, in one-letter code: Ribosomal RNA small subunit methyltransferase H (313 aa).

S-adenosyl-L-methionine is bound by residues 35–37 (GGH), D55, F79, D101, and Q108.

Belongs to the methyltransferase superfamily. RsmH family.

It is found in the cytoplasm. It catalyses the reaction cytidine(1402) in 16S rRNA + S-adenosyl-L-methionine = N(4)-methylcytidine(1402) in 16S rRNA + S-adenosyl-L-homocysteine + H(+). In terms of biological role, specifically methylates the N4 position of cytidine in position 1402 (C1402) of 16S rRNA. This chain is Ribosomal RNA small subunit methyltransferase H, found in Salmonella arizonae (strain ATCC BAA-731 / CDC346-86 / RSK2980).